The following is an 89-amino-acid chain: Small ribosomal subunit protein uS15 (89 aa).

The protein belongs to the universal ribosomal protein uS15 family. Part of the 30S ribosomal subunit. Forms a bridge to the 50S subunit in the 70S ribosome, contacting the 23S rRNA.

One of the primary rRNA binding proteins, it binds directly to 16S rRNA where it helps nucleate assembly of the platform of the 30S subunit by binding and bridging several RNA helices of the 16S rRNA. Functionally, forms an intersubunit bridge (bridge B4) with the 23S rRNA of the 50S subunit in the ribosome. The chain is Small ribosomal subunit protein uS15 from Chlorobium phaeobacteroides (strain BS1).